Reading from the N-terminus, the 202-residue chain is Small ribosomal subunit protein uS4c (202 aa).

The region spanning 90–165 (MRLDNILFRL…SQKYKIPNHL (76 aa)) is the S4 RNA-binding domain.

The protein belongs to the universal ribosomal protein uS4 family. As to quaternary structure, part of the 30S ribosomal subunit. Contacts protein S5. The interaction surface between S4 and S5 is involved in control of translational fidelity.

Its subcellular location is the plastid. It is found in the chloroplast. In terms of biological role, one of the primary rRNA binding proteins, it binds directly to 16S rRNA where it nucleates assembly of the body of the 30S subunit. Functionally, with S5 and S12 plays an important role in translational accuracy. The sequence is that of Small ribosomal subunit protein uS4c (rps4) from Diphyscium foliosum (Nut-moss).